Reading from the N-terminus, the 120-residue chain is NAD(P)H-quinone oxidoreductase subunit 3, chloroplastic (120 aa).

Helical transmembrane passes span 9 to 29 (IFWAFLMISSVIPILAFLISG), 64 to 84 (MFALVFVVFDVETVFLYPWAM), and 88 to 108 (VLGVSVFIEALIFVLIPIVGS).

It belongs to the complex I subunit 3 family. As to quaternary structure, NDH is composed of at least 16 different subunits, 5 of which are encoded in the nucleus.

It is found in the plastid. The protein resides in the chloroplast thylakoid membrane. The catalysed reaction is a plastoquinone + NADH + (n+1) H(+)(in) = a plastoquinol + NAD(+) + n H(+)(out). The enzyme catalyses a plastoquinone + NADPH + (n+1) H(+)(in) = a plastoquinol + NADP(+) + n H(+)(out). In terms of biological role, NDH shuttles electrons from NAD(P)H:plastoquinone, via FMN and iron-sulfur (Fe-S) centers, to quinones in the photosynthetic chain and possibly in a chloroplast respiratory chain. The immediate electron acceptor for the enzyme in this species is believed to be plastoquinone. Couples the redox reaction to proton translocation, and thus conserves the redox energy in a proton gradient. This Amborella trichopoda protein is NAD(P)H-quinone oxidoreductase subunit 3, chloroplastic.